The following is a 130-amino-acid chain: Methylglyoxal synthase (130 aa).

The region spanning 1-130 is the MGS-like domain; it reads MMTRPRIALI…AELSRVEAQP (130 aa). Substrate contacts are provided by residues His12, Lys16, 38-41, and 58-59; these read TGTT and SG. Asp64 (proton donor/acceptor) is an active-site residue. Substrate is bound at residue His91.

Belongs to the methylglyoxal synthase family.

The enzyme catalyses dihydroxyacetone phosphate = methylglyoxal + phosphate. Functionally, catalyzes the formation of methylglyoxal from dihydroxyacetone phosphate. This chain is Methylglyoxal synthase, found in Cupriavidus pinatubonensis (strain JMP 134 / LMG 1197) (Cupriavidus necator (strain JMP 134)).